The following is a 397-amino-acid chain: Succinyl-diaminopimelate desuccinylase (397 aa).

Residue histidine 74 coordinates Zn(2+). The active site involves aspartate 76. Zn(2+) is bound at residue aspartate 107. Glutamate 141 functions as the Proton acceptor in the catalytic mechanism. The Zn(2+) site is built by glutamate 142, glutamate 170, and histidine 368.

This sequence belongs to the peptidase M20A family. DapE subfamily. Homodimer. Zn(2+) is required as a cofactor. The cofactor is Co(2+).

The enzyme catalyses N-succinyl-(2S,6S)-2,6-diaminopimelate + H2O = (2S,6S)-2,6-diaminopimelate + succinate. It functions in the pathway amino-acid biosynthesis; L-lysine biosynthesis via DAP pathway; LL-2,6-diaminopimelate from (S)-tetrahydrodipicolinate (succinylase route): step 3/3. In terms of biological role, catalyzes the hydrolysis of N-succinyl-L,L-diaminopimelic acid (SDAP), forming succinate and LL-2,6-diaminopimelate (DAP), an intermediate involved in the bacterial biosynthesis of lysine and meso-diaminopimelic acid, an essential component of bacterial cell walls. This is Succinyl-diaminopimelate desuccinylase from Mesorhizobium japonicum (strain LMG 29417 / CECT 9101 / MAFF 303099) (Mesorhizobium loti (strain MAFF 303099)).